The primary structure comprises 176 residues: Ferritin, middle subunit (176 aa).

The Ferritin-like diiron domain maps to 7–156; it reads QNYHHDCERA…DHITNLTKMD (150 aa). Fe cation contacts are provided by Glu-24, Glu-59, His-62, Glu-104, and Gln-138.

It belongs to the ferritin family. As to quaternary structure, oligomer of 24 subunits. There are at least two types of subunits. The functional molecule forms a roughly spherical shell with a diameter of 12 nm and contains a central cavity into which the insoluble mineral iron core is deposited. In terms of tissue distribution, almost exclusively in the gonads.

It catalyses the reaction 4 Fe(2+) + O2 + 4 H(+) = 4 Fe(3+) + 2 H2O. Stores iron in a soluble, non-toxic, readily available form. Important for iron homeostasis. Has ferroxidase activity. Iron is taken up in the ferrous form and deposited as ferric hydroxides after oxidation. The sequence is that of Ferritin, middle subunit from Salmo salar (Atlantic salmon).